A 206-amino-acid polypeptide reads, in one-letter code: UPF0502 protein Acid_1185 (206 aa).

This sequence belongs to the UPF0502 family.

This is UPF0502 protein Acid_1185 from Solibacter usitatus (strain Ellin6076).